The following is a 334-amino-acid chain: Aspartate carbamoyltransferase catalytic subunit (334 aa).

Residues R71 and T72 each contribute to the carbamoyl phosphate site. K99 is an L-aspartate binding site. Carbamoyl phosphate is bound by residues R121, H151, and Q154. The L-aspartate site is built by R184 and R239. Carbamoyl phosphate contacts are provided by G280 and P281.

It belongs to the aspartate/ornithine carbamoyltransferase superfamily. ATCase family. Heterododecamer (2C3:3R2) of six catalytic PyrB chains organized as two trimers (C3), and six regulatory PyrI chains organized as three dimers (R2).

It catalyses the reaction carbamoyl phosphate + L-aspartate = N-carbamoyl-L-aspartate + phosphate + H(+). It participates in pyrimidine metabolism; UMP biosynthesis via de novo pathway; (S)-dihydroorotate from bicarbonate: step 2/3. Its function is as follows. Catalyzes the condensation of carbamoyl phosphate and aspartate to form carbamoyl aspartate and inorganic phosphate, the committed step in the de novo pyrimidine nucleotide biosynthesis pathway. The polypeptide is Aspartate carbamoyltransferase catalytic subunit (Pseudomonas putida (strain GB-1)).